We begin with the raw amino-acid sequence, 335 residues long: Mevalonate kinase (335 aa).

Residue 111–121 (PVGAGLGSSAA) coordinates ATP. Catalysis depends on Asp162, which acts as the Proton acceptor.

Belongs to the GHMP kinase family. Mevalonate kinase subfamily. Homodimer. It depends on Mg(2+) as a cofactor.

The protein resides in the cytoplasm. It carries out the reaction (R)-mevalonate + ATP = (R)-5-phosphomevalonate + ADP + H(+). It participates in isoprenoid biosynthesis; isopentenyl diphosphate biosynthesis via mevalonate pathway; isopentenyl diphosphate from (R)-mevalonate: step 1/3. Its function is as follows. Catalyzes the phosphorylation of (R)-mevalonate (MVA) to (R)-mevalonate 5-phosphate (MVAP). Functions in the mevalonate (MVA) pathway leading to isopentenyl diphosphate (IPP), a key precursor for the biosynthesis of isoprenoid compounds such as archaeal membrane lipids. The protein is Mevalonate kinase of Pyrococcus horikoshii (strain ATCC 700860 / DSM 12428 / JCM 9974 / NBRC 100139 / OT-3).